A 419-amino-acid polypeptide reads, in one-letter code: Creatine kinase S-type, mitochondrial (419 aa).

The transit peptide at Met1–Ala39 directs the protein to the mitochondrion. The cardiolipin-binding stretch occupies residues Asp40–Met64. One can recognise a Phosphagen kinase N-terminal domain in the interval Lys46–Asn132. Positions Tyr159 to Leu401 constitute a Phosphagen kinase C-terminal domain. ATP contacts are provided by residues Ser162–Arg166 and His225. Tyr255 bears the Phosphotyrosine mark. ATP-binding positions include Arg270, Arg326, Arg354–Val359, and Asp369. Thr356 is subject to Phosphothreonine.

It belongs to the ATP:guanido phosphotransferase family. As to quaternary structure, exists as an octamer composed of four CKMT2 homodimers. As to expression, sarcomere-specific. Found only in heart and skeletal muscles.

It localises to the mitochondrion inner membrane. It catalyses the reaction creatine + ATP = N-phosphocreatine + ADP + H(+). Its function is as follows. Reversibly catalyzes the transfer of phosphate between ATP and various phosphogens (e.g. creatine phosphate). Creatine kinase isoenzymes play a central role in energy transduction in tissues with large, fluctuating energy demands, such as skeletal muscle, heart, brain and spermatozoa. The polypeptide is Creatine kinase S-type, mitochondrial (Ckmt2) (Rattus norvegicus (Rat)).